The primary structure comprises 293 residues: EFIEQDAVVTISATQEDAPWGLARISSQEPGGTTYTYDDSAGTGTCAYIIDTGIYTNHTDFGGRAKFLKNFAGDGQDTDGNGHGTHVAGTVGGTTYGVAKKTSLFAVKVLDANGQGSNSGVIAGMDFVTKDASSQNCPKGVVVNMSLGGPSSSAVNRAAAEITSAGLFLAVAAGNEATDASSSSPASEESACTVGATDKTDTLAEYSNFGSVVDLLAPGTDIKSTWNDGRTKIISGTSMASPHVAGLGAYFLGLGQKVQGLCDYMVEKGLKDVIQSVPSDTANVLINNGEGSA.

The propeptide occupies 1–12; sequence EFIEQDAVVTIS. The region spanning 19–293 is the Peptidase S8 domain; the sequence is PWGLARISSQ…VLINNGEGSA (275 aa). Cystine bridges form between cysteine 46-cysteine 137 and cysteine 192-cysteine 262. Active-site charge relay system residues include aspartate 51, histidine 83, and serine 238.

It belongs to the peptidase S8 family.

In terms of biological role, serine proteinase. The protein is Proteinase T (PROT) of Parengyodontium album (Tritirachium album).